The primary structure comprises 89 residues: Small ribosomal subunit protein uS15 (89 aa).

The protein belongs to the universal ribosomal protein uS15 family. Part of the 30S ribosomal subunit. Forms a bridge to the 50S subunit in the 70S ribosome, contacting the 23S rRNA.

Its function is as follows. One of the primary rRNA binding proteins, it binds directly to 16S rRNA where it helps nucleate assembly of the platform of the 30S subunit by binding and bridging several RNA helices of the 16S rRNA. Forms an intersubunit bridge (bridge B4) with the 23S rRNA of the 50S subunit in the ribosome. In Nostoc sp. (strain PCC 7120 / SAG 25.82 / UTEX 2576), this protein is Small ribosomal subunit protein uS15.